The chain runs to 738 residues: NAD(P)H-quinone oxidoreductase subunit 5, chloroplastic (738 aa).

A run of 16 helical transmembrane segments spans residues 9–29, 40–60, 89–109, 125–145, 147–167, 185–205, 230–250, 258–278, 280–300, 327–347, 354–374, 396–416, 425–445, 546–566, 603–623, and 718–738; these read WIIPFVPLPVPMLIGVGLLLF, WAFPSILLLSIVMIFSINLSI, IDPLTSIMSMLITTVGIMVLI, FASMSFFSTSMLGLVTSSNLI, IYIFWELVGMCSYLLIGFWFT, GDFGLLLGILGFYWITGSFEF, AALLFTGAVAKSAQFPLHVWL, TPISALIHAATMVAAGIFLVA, LLPLFIVIPYIMNFISFIGII, LGYMMLALGMGSYRSALFHLI, ALLFLGSGSIIHSMETIVGYS, ISFLLGTLSLCGIPPLACFWS, WLYSPIFAIIAWSTAGLTAFY, LFPLLVLGILTLFVGSLGIPF, FSVSIAYFGIFIASFLYKPIY, and YLFFYLSCVSIFLLGLYFPVF.

This sequence belongs to the complex I subunit 5 family. NDH is composed of at least 16 different subunits, 5 of which are encoded in the nucleus.

Its subcellular location is the plastid. It localises to the chloroplast thylakoid membrane. It carries out the reaction a plastoquinone + NADH + (n+1) H(+)(in) = a plastoquinol + NAD(+) + n H(+)(out). It catalyses the reaction a plastoquinone + NADPH + (n+1) H(+)(in) = a plastoquinol + NADP(+) + n H(+)(out). Functionally, NDH shuttles electrons from NAD(P)H:plastoquinone, via FMN and iron-sulfur (Fe-S) centers, to quinones in the photosynthetic chain and possibly in a chloroplast respiratory chain. The immediate electron acceptor for the enzyme in this species is believed to be plastoquinone. Couples the redox reaction to proton translocation, and thus conserves the redox energy in a proton gradient. This is NAD(P)H-quinone oxidoreductase subunit 5, chloroplastic (ndhF) from Ligustrum vulgare (Common privet).